The chain runs to 132 residues: ATP synthase epsilon chain (132 aa).

This sequence belongs to the ATPase epsilon chain family. As to quaternary structure, F-type ATPases have 2 components, CF(1) - the catalytic core - and CF(0) - the membrane proton channel. CF(1) has five subunits: alpha(3), beta(3), gamma(1), delta(1), epsilon(1). CF(0) has three main subunits: a, b and c.

The protein resides in the cell inner membrane. Its function is as follows. Produces ATP from ADP in the presence of a proton gradient across the membrane. This chain is ATP synthase epsilon chain, found in Parvibaculum lavamentivorans (strain DS-1 / DSM 13023 / NCIMB 13966).